The chain runs to 370 residues: Arginine kinase (370 aa).

The region spanning 6–89 is the Phosphagen kinase N-terminal domain; sequence QKKYPAKDDF…FDPVIEEYHN (84 aa). In terms of domain architecture, Phosphagen kinase C-terminal spans 115–358; that stretch reads YVISSRVRTG…KVLIEMEKKL (244 aa). Residues 118–122 and H181 contribute to the ATP site; that span reads SSRVR. Position 222 (E222) interacts with substrate. R226 lines the ATP pocket. C274 provides a ligand contact to substrate. Residues 283 to 287 and 311 to 316 contribute to the ATP site; these read RCSVH and RGTSGE. E316 provides a ligand contact to substrate.

Belongs to the ATP:guanido phosphotransferase family. Homodimer. The N-terminus is blocked.

It catalyses the reaction L-arginine + ATP = N(omega)-phospho-L-arginine + ADP + H(+). The chain is Arginine kinase (AK) from Stichopus japonicus (Sea cucumber).